The primary structure comprises 440 residues: Thymidine phosphorylase (440 aa).

Belongs to the thymidine/pyrimidine-nucleoside phosphorylase family. In terms of assembly, homodimer.

It carries out the reaction thymidine + phosphate = 2-deoxy-alpha-D-ribose 1-phosphate + thymine. It participates in pyrimidine metabolism; dTMP biosynthesis via salvage pathway; dTMP from thymine: step 1/2. Functionally, the enzymes which catalyze the reversible phosphorolysis of pyrimidine nucleosides are involved in the degradation of these compounds and in their utilization as carbon and energy sources, or in the rescue of pyrimidine bases for nucleotide synthesis. This chain is Thymidine phosphorylase, found in Shigella flexneri serotype 5b (strain 8401).